Here is a 307-residue protein sequence, read N- to C-terminus: Barttin (307 aa).

The Cytoplasmic segment spans residues 1–5; sequence MADEK. Positions 1-72 are regulates channel membrane trafficking and anion conductance; the sequence is MADEKTFRIG…VPADSDFQGI (72 aa). A helical membrane pass occupies residues 6–26; the sequence is TFRIGFIVLGLFLLSLGTFLM. The Extracellular portion of the chain corresponds to 27–32; the sequence is SHDRPQ. Residues 33–53 form a helical membrane-spanning segment; it reads VYGTFYAMGSVMVIGGVIWSM. S-palmitoyl cysteine attachment occurs at residues Cys-54 and Cys-56. The Cytoplasmic portion of the chain corresponds to 54–307; that stretch reads CQCYPKITFV…ELGFEPDIQG (254 aa). Residues Ser-79 and Ser-107 each carry the phosphoserine modification. Disordered stretches follow at residues 135 to 154 and 161 to 224; these read TGAS…WMEA and GSDE…RGPL. Residues 161 to 171 are compositionally biased toward basic and acidic residues; sequence GSDENEGEKSH. The residue at position 162 (Ser-162) is a Phosphoserine. A compositionally biased stretch (low complexity) spans 172–183; it reads SQSSPSVGPQGS. A compositionally biased stretch (polar residues) spans 198 to 207; it reads SEGSSLQPSP. 2 positions are modified to phosphoserine: Ser-228 and Ser-289. Residues 255–307 are disordered; it reads RKQQWSLRMKGETVQARAEEPEQEEEDLYYGLPDSPGNPLPDKELGFEPDIQG.

As to quaternary structure, interacts with CLCNK channels. Forms probably heteromers with CLCNKA in the thin ascending limb of Henle and with CLCNKB in the thick ascending limb and more distal segments. Palmitoylation is necessary for activation of plasma membrane-inserted CLC-K/barttin channels. In terms of tissue distribution, expression is evident in inner and outer stripes of the outer medulla of the kidney, most probably representing thin limbs of Henle's loop together with some collecting duct coursing through the outer stripe. In situ hybridization in fetal kidney at 18.5 dpc revealed a clear continuity between hybridization signals from the thin limb of Henle's loop and the distal convoluted tubule, suggesting that part of the expression pattern may result from expression in the thick ascending limb of Henle's loop. In addition, strong signals are present in a subset of cortical tubules, representing distal convoluted tubules or cortical collecting duct. Strong expression is also observed in the inner medulla of the kidney. This expression does not extend all the way to the tip of the papilla. Thus this signal most probably represents cells of the thin ascending limbs. In the inner ear, strong and exclusive expression is detected in marginal cells of the stria vascularis. In addition to cochlear signal, expression is observed in dark cells localized at the base of the crista ampullaris of the vestibular organ.

Its subcellular location is the basolateral cell membrane. Its function is as follows. Regulatory subunit of anion-selective CLCNKA:BSND and CLCNKB:BSND heteromeric channels involved in basolateral chloride conductance along the nephron to achieve urine concentration and maintain systemic acid-base homeostasis, and in the stria vascularis of the inner ear to establish the endocochlear potential necessary for normal hearing. Most likely acts as a chaperone that allosterically regulates proper sorting of CLCNKA:BSND and CLCNKB:BSND channels at the basolateral plasma membrane domain and functional switch to ion conducting state. Mediates constitutive opening of channel common gates. The sequence is that of Barttin from Mus musculus (Mouse).